Consider the following 437-residue polypeptide: Trigger factor (437 aa).

One can recognise a PPIase FKBP-type domain in the interval 163–248; that stretch reads GDRVIIDFEG…LNNVSEATLP (86 aa).

The protein belongs to the FKBP-type PPIase family. Tig subfamily.

It localises to the cytoplasm. The enzyme catalyses [protein]-peptidylproline (omega=180) = [protein]-peptidylproline (omega=0). In terms of biological role, involved in protein export. Acts as a chaperone by maintaining the newly synthesized protein in an open conformation. Functions as a peptidyl-prolyl cis-trans isomerase. In Neisseria meningitidis serogroup B (strain ATCC BAA-335 / MC58), this protein is Trigger factor (tig).